The following is a 443-amino-acid chain: Ribosomal protein uS12 methylthiotransferase RimO (443 aa).

The region spanning 5 to 115 (PNIGFISLGC…VMKHVHKYVP (111 aa)) is the MTTase N-terminal domain. Positions 14, 50, 79, 147, 151, and 154 each coordinate [4Fe-4S] cluster. A Radical SAM core domain is found at 133–374 (LTPKHYAYLK…MQLQQKISAE (242 aa)). The TRAM domain maps to 377–443 (RQKIGRTLSV…ADEYDLWGEI (67 aa)).

Belongs to the methylthiotransferase family. RimO subfamily. [4Fe-4S] cluster is required as a cofactor.

It localises to the cytoplasm. The catalysed reaction is L-aspartate(89)-[ribosomal protein uS12]-hydrogen + (sulfur carrier)-SH + AH2 + 2 S-adenosyl-L-methionine = 3-methylsulfanyl-L-aspartate(89)-[ribosomal protein uS12]-hydrogen + (sulfur carrier)-H + 5'-deoxyadenosine + L-methionine + A + S-adenosyl-L-homocysteine + 2 H(+). Its function is as follows. Catalyzes the methylthiolation of an aspartic acid residue of ribosomal protein uS12. In Histophilus somni (strain 2336) (Haemophilus somnus), this protein is Ribosomal protein uS12 methylthiotransferase RimO.